The following is a 222-amino-acid chain: UPF0173 metal-dependent hydrolase Nther_2337 (222 aa).

This sequence belongs to the UPF0173 family.

The polypeptide is UPF0173 metal-dependent hydrolase Nther_2337 (Natranaerobius thermophilus (strain ATCC BAA-1301 / DSM 18059 / JW/NM-WN-LF)).